A 557-amino-acid polypeptide reads, in one-letter code: Urocanate hydratase (557 aa).

NAD(+) contacts are provided by residues 53-54, glutamine 131, 177-179, glutamate 197, 243-244, 264-268, 274-275, and tyrosine 323; these read GG, GMG, NA, QTSAH, and YL. Cysteine 411 is a catalytic residue. Residue glycine 493 participates in NAD(+) binding.

Belongs to the urocanase family. The cofactor is NAD(+).

It localises to the cytoplasm. The catalysed reaction is 4-imidazolone-5-propanoate = trans-urocanate + H2O. The protein operates within amino-acid degradation; L-histidine degradation into L-glutamate; N-formimidoyl-L-glutamate from L-histidine: step 2/3. Catalyzes the conversion of urocanate to 4-imidazolone-5-propionate. The chain is Urocanate hydratase from Mesorhizobium japonicum (strain LMG 29417 / CECT 9101 / MAFF 303099) (Mesorhizobium loti (strain MAFF 303099)).